The primary structure comprises 194 residues: Adenylate kinase (194 aa).

11–16 (GSGKGT) serves as a coordination point for ATP. Residues 31-60 (STGELLRAEIKAQTELGQAAAGYINEGHLV) are NMP. AMP contacts are provided by residues Thr32, Arg37, 58 to 60 (HLV), 86 to 89 (GFPR), and Gln93. The LID stretch occupies residues 127–137 (NRGKISGRSDD). Residue Arg128 participates in ATP binding. Arg134 and Arg145 together coordinate AMP. Gly173 lines the ATP pocket.

The protein belongs to the adenylate kinase family. As to quaternary structure, monomer.

The protein localises to the cytoplasm. It carries out the reaction AMP + ATP = 2 ADP. It functions in the pathway purine metabolism; AMP biosynthesis via salvage pathway; AMP from ADP: step 1/1. Functionally, catalyzes the reversible transfer of the terminal phosphate group between ATP and AMP. Plays an important role in cellular energy homeostasis and in adenine nucleotide metabolism. In Porphyromonas gingivalis (strain ATCC 33277 / DSM 20709 / CIP 103683 / JCM 12257 / NCTC 11834 / 2561), this protein is Adenylate kinase.